The following is a 164-amino-acid chain: HTH-type transcriptional regulator IscR (164 aa).

An HTH rrf2-type domain is found at 2–131 (RLTSKGRYAV…NNITLDELVN (130 aa)). A DNA-binding region (H-T-H motif) is located at residues 28–51 (LADISERQGISLSYLEQLFSRLRK). Positions 92, 98, and 104 each coordinate [2Fe-2S] cluster.

[2Fe-2S] cluster is required as a cofactor.

Its function is as follows. Regulates the transcription of several operons and genes involved in the biogenesis of Fe-S clusters and Fe-S-containing proteins. The polypeptide is HTH-type transcriptional regulator IscR (Pectobacterium atrosepticum (strain SCRI 1043 / ATCC BAA-672) (Erwinia carotovora subsp. atroseptica)).